The sequence spans 294 residues: NADH-cytochrome b5 reductase 1 (294 aa).

A helical transmembrane segment spans residues 18–38; that stretch reads PFIVFATVATIISAFIGYYFL. One can recognise an FAD-binding FR-type domain in the interval 51–154; it reads DEFQKFPLIE…RGPKGFFTYT (104 aa). FAD contacts are provided by residues 134-149 and 160-192; these read AGKNVGEHIEIRGPKG and SFGMIAGGTGIAPMYQIITAILKNPEDKTKIHL.

It belongs to the flavoprotein pyridine nucleotide cytochrome reductase family. As to quaternary structure, monomer. Component of the 2-(3-amino-3-carboxypropyl)histidine synthase complex composed of DPH1, DPH2, DPH3 and a NADH-dependent reductase, predominantly CBR1. FAD is required as a cofactor.

Its subcellular location is the mitochondrion outer membrane. The enzyme catalyses 2 Fe(III)-[cytochrome b5] + NADH = 2 Fe(II)-[cytochrome b5] + NAD(+) + H(+). It catalyses the reaction 2 Fe(3+)-[Dph3] + NADH = 2 Fe(2+)-[Dph3] + NAD(+) + H(+). Its pathway is protein modification; peptidyl-diphthamide biosynthesis. Its function is as follows. NADH-dependent reductase for DPH3 and cytochrome b5. Required for the first step of diphthamide biosynthesis, a post-translational modification of histidine which occurs in elongation factor 2. DPH1 and DPH2 transfer a 3-amino-3-carboxypropyl (ACP) group from S-adenosyl-L-methionine (SAM) to a histidine residue, the reaction is assisted by a reduction system comprising DPH3 and a NADH-dependent reductase, predominantly CBR1. By reducing DPH3, also involved in the formation of the tRNA wobble base modification mcm5s 2U (5-methoxycarbonylmethyl-2-thiouridine), mediated by the elongator complex. The cytochrome b5/NADH cytochrome b5 reductase electron transfer system supports the catalytic activity of several sterol biosynthetic enzymes. The sequence is that of NADH-cytochrome b5 reductase 1 (CBR1) from Candida albicans (strain SC5314 / ATCC MYA-2876) (Yeast).